The chain runs to 506 residues: Nostrin (506 aa).

In terms of domain architecture, F-BAR spans 1-260 (MRDPLTDCSY…AISKVDVEKD (260 aa)). At Ser114 the chain carries Phosphoserine. Coiled coils occupy residues 160–230 (SLTQ…LNQY) and 305–334 (KLGRLQRDIEKASRDKEGLERKLKALASSS). One can recognise an REM-1 domain in the interval 292-372 (PMDKERRKSL…SYKLSSVLAD (81 aa)). The disordered stretch occupies residues 413-435 (KAESKAPAGGQNNPSSSPSGSTV). The segment covering 419–435 (PAGGQNNPSSSPSGSTV) has biased composition (low complexity). One can recognise an SH3 domain in the interval 438–497 (ASKHLCKALYTFQARQDDELNLEKGDIVTVHEKKEEGWWFGSLKGKRGHFPAAYVEELPP). Residue Ser479 is modified to Phosphoserine.

Homotrimer. Interacts with NOS3, DNM2, WASL and CAV1. Interacts with DAB2. Interacts (via SH3 domain) with DNM2; this interaction allows the recruitment of NOS3 to dynamin-positive structures.

The protein localises to the cell membrane. It localises to the cytoplasmic vesicle. It is found in the cytoplasm. Its subcellular location is the cytoskeleton. The protein resides in the nucleus. In terms of biological role, multivalent adapter protein which may decrease NOS3 activity by inducing its translocation away from the plasma membrane. The chain is Nostrin from Mus musculus (Mouse).